A 199-amino-acid chain; its full sequence is Fe/S biogenesis protein NfuA (199 aa).

[4Fe-4S] cluster contacts are provided by C151 and C154.

This sequence belongs to the NfuA family. Homodimer. [4Fe-4S] cluster serves as cofactor.

In terms of biological role, involved in iron-sulfur cluster biogenesis. Binds a 4Fe-4S cluster, can transfer this cluster to apoproteins, and thereby intervenes in the maturation of Fe/S proteins. Could also act as a scaffold/chaperone for damaged Fe/S proteins. In Xanthomonas axonopodis pv. citri (strain 306), this protein is Fe/S biogenesis protein NfuA.